Here is a 445-residue protein sequence, read N- to C-terminus: CBL-interacting protein kinase 3 (445 aa).

One can recognise a Protein kinase domain in the interval 19-274 (YELGRAIGQG…TSQVLQDQWF (256 aa)). ATP contacts are provided by residues 25–33 (IGQGTFAKV) and Lys-48. Asp-142 acts as the Proton acceptor in catalysis. The activation loop stretch occupies residues 160-189 (DFGLSAISEQVKADGLLHTTCGTPNYVAPE). The NAF domain occupies 309-336 (AMEEQPTLMNAFELISLNKGLNLDNFFE). The segment at 342 to 371 (KRETRFTSQCPPKEIINRIEEAANLLGFNI) is PPI.

Belongs to the protein kinase superfamily. CAMK Ser/Thr protein kinase family. SNF1 subfamily. The cofactor is Mn(2+).

The enzyme catalyses L-seryl-[protein] + ATP = O-phospho-L-seryl-[protein] + ADP + H(+). The catalysed reaction is L-threonyl-[protein] + ATP = O-phospho-L-threonyl-[protein] + ADP + H(+). Functionally, CIPK serine-threonine protein kinases interact with CBL proteins. Binding of a CBL protein to the regulatory NAF domain of CIPK protein lead to the activation of the kinase in a calcium-dependent manner. This Oryza sativa subsp. japonica (Rice) protein is CBL-interacting protein kinase 3 (CIPK3).